We begin with the raw amino-acid sequence, 288 residues long: Acetylglutamate kinase (288 aa).

Residues 66–67 (GG), Arg88, and Asn182 each bind substrate.

Belongs to the acetylglutamate kinase family. ArgB subfamily.

The protein resides in the cytoplasm. The enzyme catalyses N-acetyl-L-glutamate + ATP = N-acetyl-L-glutamyl 5-phosphate + ADP. It participates in amino-acid biosynthesis; L-arginine biosynthesis; N(2)-acetyl-L-ornithine from L-glutamate: step 2/4. Its function is as follows. Catalyzes the ATP-dependent phosphorylation of N-acetyl-L-glutamate. The polypeptide is Acetylglutamate kinase (Brachyspira hyodysenteriae (strain ATCC 49526 / WA1)).